The following is a 43-amino-acid chain: METATLVTIFISGLLVSFTGYALYIAFGQPSQQLRDPFEEHGD.

Residues 7 to 27 form a helical membrane-spanning segment; sequence VTIFISGLLVSFTGYALYIAF.

It belongs to the PsbN family.

It localises to the plastid. Its subcellular location is the chloroplast thylakoid membrane. Its function is as follows. May play a role in photosystem I and II biogenesis. This is Protein PsbN from Dioscorea bulbifera (Air potato).